A 525-amino-acid chain; its full sequence is Probable lipid II flippase MurJ (525 aa).

The next 14 helical transmembrane spans lie at 10–30 (LLKSGIIVSAMTLISRVLGLV), 32–52 (DVVVANLMGAGASADVFFFAN), 100–120 (VLVTIVTLIGVLGSGAVTALF), 140–160 (LASLLLKITFPYLWFITFVAL), 171–191 (FAVSSFTPVFLNVMMILCAWY), 203–223 (LAIGVFLGGLVQFLFQLPFLI), 247–267 (MIPALFGVSVSQINLLFDSFV), 285–305 (LLEFPLGLFGIAIATVILPAL), 330–350 (FLGIPAMLGLMVLAKPMLMVL), 368–388 (LLAYSSGLLSFMLIKVLAPGY), 402–422 (IIAMVSNIVLNAIFAWFYGYV), 423–443 (GLAVATSMSAFLNMALLYRGL), 455–475 (TVWFVARLAMAGAVMTGALLW), and 495–515 (LTGLIGLGVASYLAILLLLGV).

The protein belongs to the MurJ/MviN family.

Its subcellular location is the cell inner membrane. It functions in the pathway cell wall biogenesis; peptidoglycan biosynthesis. Involved in peptidoglycan biosynthesis. Transports lipid-linked peptidoglycan precursors from the inner to the outer leaflet of the cytoplasmic membrane. The sequence is that of Probable lipid II flippase MurJ from Vibrio cholerae serotype O1 (strain ATCC 39315 / El Tor Inaba N16961).